The following is a 751-amino-acid chain: Zinc finger protein 337 (751 aa).

The KRAB domain occupies leucine 12–alanine 83. Positions glutamine 101–aspartate 116 are enriched in low complexity. The segment at glutamine 101–threonine 163 is disordered. The C2H2-type 1; degenerate zinc-finger motif lies at phenylalanine 180–histidine 202. 9 C2H2-type zinc fingers span residues phenylalanine 208–histidine 230, tyrosine 236–histidine 258, phenylalanine 264–histidine 286, tyrosine 292–histidine 314, phenylalanine 320–histidine 342, tyrosine 348–histidine 370, phenylalanine 376–histidine 398, phenylalanine 404–histidine 426, and phenylalanine 432–histidine 454. Lysine 458 participates in a covalent cross-link: Glycyl lysine isopeptide (Lys-Gly) (interchain with G-Cter in SUMO2). 10 C2H2-type zinc fingers span residues phenylalanine 460 to histidine 482, tyrosine 488 to histidine 510, phenylalanine 516 to histidine 538, phenylalanine 544 to histidine 566, phenylalanine 572 to histidine 594, phenylalanine 600 to histidine 622, phenylalanine 628 to histidine 650, phenylalanine 656 to histidine 679, phenylalanine 685 to histidine 707, and tyrosine 713 to histidine 735.

The protein belongs to the krueppel C2H2-type zinc-finger protein family.

The protein resides in the nucleus. May be involved in transcriptional regulation. The polypeptide is Zinc finger protein 337 (ZNF337) (Homo sapiens (Human)).